The chain runs to 821 residues: Cell wall integrity transcriptional regulator CAS5 (821 aa).

Disordered stretches follow at residues 42-66, 219-245, 305-432, 544-576, and 607-750; these read HLQS…LNQH, FESP…LSTP, TKSN…STSQ, QEEE…TSSL, and VKQE…KHKC. The segment covering 222 to 245 has biased composition (polar residues); that stretch reads PQSHIQSQPSYSQGYHNQNSLSTP. A compositionally biased stretch (low complexity) spans 305 to 318; that stretch reads TKSNSTSSYNSTLN. Positions 319-329 are enriched in polar residues; that stretch reads PFYTPSQQLSS. Basic residues predominate over residues 372–387; that stretch reads QLRKAKSYTSLLRKKK. The span at 396-412 shows a compositional bias: low complexity; it reads QNQQHQQQQQQQQQQQQ. A compositionally biased stretch (polar residues) spans 422 to 432; that stretch reads QNLSFPNSTSQ. Over residues 545–561 the composition is skewed to acidic residues; sequence EEEQEHQDEQMEIDSFE. 2 stretches are compositionally biased toward low complexity: residues 662 to 674 and 684 to 693; these read LVNK…NNDT and KNTNGNGNND. The span at 694 to 714 shows a compositional bias: acidic residues; it reads NDNDSEENNDNVDDADDDDDG. 2 consecutive C2H2-type zinc fingers follow at residues 748-770 and 776-801; these read HKCP…LKSH and FECQ…KKIH. Ser769 bears the Phosphoserine mark.

Phosphorylation at Ser-769 and probably additional serine residues. GLC7 dephosphorylates CAS5 in response to cell wall stress which leads to its translocation to the nucleus.

Its subcellular location is the nucleus. The protein localises to the cytoplasm. Transcription factor that acts with ADA2 to promote cell wall integrity. Regulates the expression of target genes in concert with the transcriptional regulators SWI4 and SWI6. Crucial for proper cell cycle dynamics and responses to echinocandins, which inhibit beta-1,3-glucan synthesis. Has distinct transcriptional targets under basal and stress conditions. Also regulates a transcriptional network that influences the response to fluconazole. Plays a key role in adherence, hyphal development, and virulence. Acts as a repressor of hypha-specific genes during yeast-form growth. The protein is Cell wall integrity transcriptional regulator CAS5 of Candida albicans (strain SC5314 / ATCC MYA-2876) (Yeast).